A 154-amino-acid polypeptide reads, in one-letter code: MKNVIIDLQIASEDVTNLPSVEQIQLWANAAIRAENSQPEMTVRIVDEEESHHLNLTYRGKDKPTNVLSFPFECPDEIELPLIGDLVICRQVVEREATEQEKPLMAHWAHMIVHGSLHLLGYDHIEDDEAEEMERLETEIMLSLGFTDPYIIEK.

Residues histidine 114, histidine 118, and histidine 124 each coordinate Zn(2+).

Belongs to the endoribonuclease YbeY family. Zn(2+) is required as a cofactor.

It is found in the cytoplasm. Its function is as follows. Single strand-specific metallo-endoribonuclease involved in late-stage 70S ribosome quality control and in maturation of the 3' terminus of the 16S rRNA. The chain is Endoribonuclease YbeY from Histophilus somni (strain 129Pt) (Haemophilus somnus).